Consider the following 472-residue polypeptide: Maintenance of mitochondrial morphology protein 1 (472 aa).

Residues M1 to G22 are Lumenal-facing. Residues F23 to F43 form a helical membrane-spanning segment. Topologically, residues G44–Q472 are cytoplasmic. Disordered stretches follow at residues S51–S92, L270–S303, and R370–Q472. Polar residues predominate over residues S81 to S92. Residues Q124–P365 enclose the SMP-LTD domain. Positions L270 to P280 are enriched in pro residues. A compositionally biased stretch (low complexity) spans T281–D297. Residues T450–H460 are compositionally biased toward basic and acidic residues.

The protein belongs to the MMM1 family. Homodimer. Component of the ER-mitochondria encounter structure (ERMES) or MDM complex, composed of mmm1, mdm10, mdm12 and mdm34. A mmm1 homodimer associates with one molecule of mdm12 on each side in a pairwise head-to-tail manner, and the SMP-LTD domains of mmm1 and mdm12 generate a continuous hydrophobic tunnel for phospholipid trafficking.

It is found in the endoplasmic reticulum membrane. Its function is as follows. Component of the ERMES/MDM complex, which serves as a molecular tether to connect the endoplasmic reticulum (ER) and mitochondria. Components of this complex are involved in the control of mitochondrial shape and protein biogenesis, and function in nonvesicular lipid trafficking between the ER and mitochondria. The mdm12-mmm1 subcomplex functions in the major beta-barrel assembly pathway that is responsible for biogenesis of all outer membrane beta-barrel proteins, and acts in a late step after the SAM complex. The mdm10-mdm12-mmm1 subcomplex further acts in the TOM40-specific pathway after the action of the mdm12-mmm1 complex. Essential for establishing and maintaining the structure of mitochondria and maintenance of mtDNA nucleoids. The sequence is that of Maintenance of mitochondrial morphology protein 1 from Emericella nidulans (strain FGSC A4 / ATCC 38163 / CBS 112.46 / NRRL 194 / M139) (Aspergillus nidulans).